A 467-amino-acid polypeptide reads, in one-letter code: Cysteine--tRNA ligase (467 aa).

Cys-30 is a Zn(2+) binding site. Positions 32-42 (PTVYDDSHLGH) match the 'HIGH' region motif. Zn(2+) contacts are provided by Cys-209, His-239, and Glu-243. The 'KMSKS' region signature appears at 271–275 (KMSKS). Residue Lys-274 participates in ATP binding.

It belongs to the class-I aminoacyl-tRNA synthetase family. Monomer. It depends on Zn(2+) as a cofactor.

It localises to the cytoplasm. It carries out the reaction tRNA(Cys) + L-cysteine + ATP = L-cysteinyl-tRNA(Cys) + AMP + diphosphate. In Aliarcobacter butzleri (strain RM4018) (Arcobacter butzleri), this protein is Cysteine--tRNA ligase.